A 621-amino-acid chain; its full sequence is NADPH-dependent diflavin oxidoreductase 1 (621 aa).

The region spanning 6–168 is the Flavodoxin-like domain; the sequence is IAVLYGSETG…VYFEFEKRII (163 aa). FMN-binding positions include 12–17, 59–62, 106–115, and Glu-142; these read SETGNA, STTG, and LGDSSYPKFN. An FAD-binding FR-type domain is found at 224–489; the sequence is KLIKTGTITL…VGPGVGLAPL (266 aa). Residues Arg-381, 411-414, and 443-446 each bind FAD; these read RLYS and GVCT. NADP(+) contacts are provided by residues 536-537 and 545-549; these read SR and TKYVQ. Trp-621 contributes to the FAD binding site.

This sequence belongs to the NADPH-dependent diflavin oxidoreductase NDOR1 family. It in the N-terminal section; belongs to the flavodoxin family. In the C-terminal section; belongs to the flavoprotein pyridine nucleotide cytochrome reductase family. In terms of assembly, interacts with DRE2; as part of the cytosolic iron-sulfur (Fe-S) protein assembly (CIA) machinery. FAD serves as cofactor. The cofactor is FMN.

The protein resides in the cytoplasm. It is found in the mitochondrion. It carries out the reaction 2 oxidized [2Fe-2S]-[protein] + NADPH = 2 reduced [2Fe-2S]-[protein] + NADP(+) + H(+). Its function is as follows. NADPH-dependent reductase which is a central component of the cytosolic iron-sulfur (Fe-S) protein assembly (CIA) machinery. Transfers electrons from NADPH via its FAD and FMN prosthetic groups to the [2Fe-2S] cluster of DRE2, another key component of the CIA machinery. In turn, this reduced cluster provides electrons for assembly of cytosolic iron-sulfur cluster proteins. Positively controls H(2)O(2)-induced cell death. This Candida glabrata (strain ATCC 2001 / BCRC 20586 / JCM 3761 / NBRC 0622 / NRRL Y-65 / CBS 138) (Yeast) protein is NADPH-dependent diflavin oxidoreductase 1.